Reading from the N-terminus, the 197-residue chain is Xanthine phosphoribosyltransferase (197 aa).

Leucine 20 and asparagine 27 together coordinate xanthine. 128–132 is a 5-phospho-alpha-D-ribose 1-diphosphate binding site; it reads ANGQA. Position 156 (lysine 156) interacts with xanthine.

The protein belongs to the purine/pyrimidine phosphoribosyltransferase family. Xpt subfamily. In terms of assembly, homodimer.

The protein localises to the cytoplasm. It carries out the reaction XMP + diphosphate = xanthine + 5-phospho-alpha-D-ribose 1-diphosphate. The protein operates within purine metabolism; XMP biosynthesis via salvage pathway; XMP from xanthine: step 1/1. Its function is as follows. Converts the preformed base xanthine, a product of nucleic acid breakdown, to xanthosine 5'-monophosphate (XMP), so it can be reused for RNA or DNA synthesis. The polypeptide is Xanthine phosphoribosyltransferase (Bacillus mycoides (strain KBAB4) (Bacillus weihenstephanensis)).